The primary structure comprises 423 residues: tRNA(Ile)-lysidine synthase (423 aa).

Ser27–Ser32 lines the ATP pocket.

The protein belongs to the tRNA(Ile)-lysidine synthase family.

The protein resides in the cytoplasm. It catalyses the reaction cytidine(34) in tRNA(Ile2) + L-lysine + ATP = lysidine(34) in tRNA(Ile2) + AMP + diphosphate + H(+). Ligates lysine onto the cytidine present at position 34 of the AUA codon-specific tRNA(Ile) that contains the anticodon CAU, in an ATP-dependent manner. Cytidine is converted to lysidine, thus changing the amino acid specificity of the tRNA from methionine to isoleucine. In Streptococcus mutans serotype c (strain ATCC 700610 / UA159), this protein is tRNA(Ile)-lysidine synthase.